The chain runs to 62 residues: Chromatin protein Cren7 (62 aa).

It belongs to the Cren7 family. Monomer. In terms of processing, methylated at multiple sites, to varying extents.

Its subcellular location is the chromosome. The protein resides in the cytoplasm. Its function is as follows. A chromatin protein, binds double-stranded DNA without sequence specificity. Constrains negative DNA supercoils. This Staphylothermus marinus (strain ATCC 43588 / DSM 3639 / JCM 9404 / F1) protein is Chromatin protein Cren7.